The sequence spans 203 residues: Sporulation delaying protein C (203 aa).

A signal peptide spans 1 to 32 (MKSKLLRLLIVSMVTILVFSLVGLSKESSTSA). The propeptide at 33–140 (KENHTFSGED…KYSSNKVTPS (108 aa)) is removed in mature form. An intrachain disulfide couples C141 to C147. Positions 183–203 (SASNNSDLEAAAAKTLKLIHQ) are cleaved as a propeptide — removed in mature form.

In terms of assembly, proprotein probably interacts with chaperone CsaA. Post-translationally, production of active SDP (able to induce SdpI and kill cells) is a multi-step process that requires signal peptide cleavage (probably by SipS or SipT) as well as SdpA and SdpB. The disulfide bond is not required for maximum toxicity.

Its subcellular location is the secreted. Produces a 42-residue extracellular sporulation delaying protein (SDP) that collapses the proton motive force (probably both the membrane potential and pH gradient) across the cell membrane, which leads to autolysis; may form a proton channel. Induces the lysis of other B.subtilis cells that have not entered the sporulation pathway, inducing cannibalism to provide a source of nutrients to support sporulation, and at the same time delaying commitment to the energetically expensive and irreversible onset of sporulation. Addition of SDP to liquid cultures halts growth, leads to increased cell permeability and eventually cell lysis in a significant subset of the population, although some cells survive and resume growth after a lag period. Effects of SDP are irreversible within 10 minutes. Addition of SDP to solid cultures induces killing, it is much more effective than SKF (AC O31422). Has antibiotic action against Gram-positive Firmicutes (L.acidophilus, M.megaterium, P.polymyxa, S.aureus, S.epidermidis) but not Actinobacteria M.luteus or Gram-negative P.aeruginosa or K.pneumoniae. SDP induces expression of the sdpR-sdpI operon. Its maturation is dependent on SdpA and SdpB. Also functions as a ligand, binds to SdpI triggering a signal transduction cascade that protects the cell against the toxic effects of its own SDP. The polypeptide is Sporulation delaying protein C (Bacillus subtilis (strain 168)).